The chain runs to 535 residues: Probable serine/threonine protein phosphatase 2A regulatory subunit B''delta (535 aa).

A disordered region spans residues 67 to 104; that stretch reads SGTNSGSNSPLASMFPARNGPPLSPRNSTGSPRIARQR. EF-hand domains follow at residues 174 to 209 and 387 to 422; these read VPSF…GNML and SSEP…QLHR. Positions 400, 402, 404, and 411 each coordinate Ca(2+).

In terms of assembly, PP2A consists of a common heterodimeric core enzyme, composed of a 36 kDa catalytic subunit (subunit C) and a 65 kDa constant regulatory subunit (PR65 or subunit A), that associates with a variety of regulatory subunits. Proteins that associate with the core dimer include three families of regulatory subunits B (the R2/B/PR55/B55, R3/B''/PR72/PR130/PR59 and R5/B'/B56 families) and cell signaling molecules.

Its function is as follows. Probable regulatory subunit of type 2A protein phosphatase. The protein is Probable serine/threonine protein phosphatase 2A regulatory subunit B''delta (B''DELTA) of Arabidopsis thaliana (Mouse-ear cress).